The primary structure comprises 462 residues: Sensor histidine kinase RegB (462 aa).

Residues 1–25 are Cytoplasmic-facing; sequence MILGPDGILNRDTRGDWVRLRTLIL. Residues 26-45 form a helical membrane-spanning segment; the sequence is LRWMAVAGQLAAIVVTDWYL. Residues 46–51 are Extracellular-facing; it reads GVRLPM. The chain crosses the membrane as a helical span at residues 52–70; it reads GLCFMAVGASVIANVIATF. The Cytoplasmic segment spans residues 71–78; it reads VFPQNRRL. The helical transmembrane segment at 79 to 96 threads the bilayer; the sequence is TEFQALMILLFDLTQLSF. The Extracellular portion of the chain corresponds to 97–103; that stretch reads LLFLTGG. The helical transmembrane segment at 104-123 threads the bilayer; it reads LTNPFALLILAPVTISALAL. The Cytoplasmic portion of the chain corresponds to 124 to 129; the sequence is ELRTTV. Residues 130–149 traverse the membrane as a helical segment; that stretch reads ILGAIAIGLLTFTAYFHLPL. The Extracellular segment spans residues 150 to 164; that stretch reads ILADGSSLSVPRMFE. A helical transmembrane segment spans residues 165 to 182; the sequence is FGFWLAIVIGILFLGLYS. Over 183–462 the chain is Cytoplasmic; it reads RRVAIEIRSM…PLGENVLIQT (280 aa). The Histidine kinase domain occupies 218 to 445; that stretch reads AAAHELGTPL…IVEVIWPVDR (228 aa). At His221 the chain carries Phosphohistidine; by autocatalysis.

Its subcellular location is the cell inner membrane. It catalyses the reaction ATP + protein L-histidine = ADP + protein N-phospho-L-histidine.. Its function is as follows. Member of the two-component regulatory system RegB/RegA. Involved in the positive regulation of photosynthesis gene expression in response to anaerobiosis. Also involved in positive regulation of the cbbI and cbbII Calvin cycle CO2 fixation operons, as well as in regulation of expression of genes involved in alternative CO2 fixation pathways. Phosphorylates RegA/PrrA. This is Sensor histidine kinase RegB (regB) from Cereibacter sphaeroides (strain ATCC 17023 / DSM 158 / JCM 6121 / CCUG 31486 / LMG 2827 / NBRC 12203 / NCIMB 8253 / ATH 2.4.1.) (Rhodobacter sphaeroides).